A 349-amino-acid polypeptide reads, in one-letter code: DNA integrity scanning protein DisA (349 aa).

Residues 3 to 143 (KQDLMDIIVK…LKYRLKNFDE (141 aa)) form the DAC domain. Residues Gly70, Val88, and 101–105 (TRHRT) contribute to the ATP site.

Belongs to the DisA family. Homooctamer. The cofactor is Mg(2+).

The catalysed reaction is 2 ATP = 3',3'-c-di-AMP + 2 diphosphate. In terms of biological role, participates in a DNA-damage check-point. DisA forms globular foci that rapidly scan along the chromosomes searching for lesions. Also has diadenylate cyclase activity, catalyzing the condensation of 2 ATP molecules into cyclic di-AMP (c-di-AMP). c-di-AMP likely acts as a signaling molecule that may couple DNA integrity with a cellular process. The sequence is that of DNA integrity scanning protein DisA from Fusobacterium nucleatum subsp. nucleatum (strain ATCC 25586 / DSM 15643 / BCRC 10681 / CIP 101130 / JCM 8532 / KCTC 2640 / LMG 13131 / VPI 4355).